The primary structure comprises 363 residues: 3-isopropylmalate dehydrogenase (363 aa).

G78–E91 is a binding site for NAD(+). 4 residues coordinate substrate: R99, R109, R138, and D227. The Mg(2+) site is built by D227, D251, and D255. An NAD(+)-binding site is contributed by G285–N297.

The protein belongs to the isocitrate and isopropylmalate dehydrogenases family. LeuB type 1 subfamily. Homodimer. Mg(2+) is required as a cofactor. Mn(2+) serves as cofactor.

It is found in the cytoplasm. The enzyme catalyses (2R,3S)-3-isopropylmalate + NAD(+) = 4-methyl-2-oxopentanoate + CO2 + NADH. Its pathway is amino-acid biosynthesis; L-leucine biosynthesis; L-leucine from 3-methyl-2-oxobutanoate: step 3/4. In terms of biological role, catalyzes the oxidation of 3-carboxy-2-hydroxy-4-methylpentanoate (3-isopropylmalate) to 3-carboxy-4-methyl-2-oxopentanoate. The product decarboxylates to 4-methyl-2 oxopentanoate. In Buchnera aphidicola subsp. Schizaphis graminum (strain Sg), this protein is 3-isopropylmalate dehydrogenase.